Reading from the N-terminus, the 287-residue chain is Glutamate racemase (287 aa).

Substrate contacts are provided by residues 32 to 33 (DS) and 64 to 65 (YG). C96 serves as the catalytic Proton donor/acceptor. 97–98 (NT) contacts substrate. The active-site Proton donor/acceptor is C208. A substrate-binding site is contributed by 209–210 (TH).

It belongs to the aspartate/glutamate racemases family.

It catalyses the reaction L-glutamate = D-glutamate. The protein operates within cell wall biogenesis; peptidoglycan biosynthesis. Provides the (R)-glutamate required for cell wall biosynthesis. In Yersinia enterocolitica serotype O:8 / biotype 1B (strain NCTC 13174 / 8081), this protein is Glutamate racemase.